The sequence spans 159 residues: 2-C-methyl-D-erythritol 2,4-cyclodiphosphate synthase (159 aa).

A divalent metal cation is bound by residues Asp-10 and His-12. 4-CDP-2-C-methyl-D-erythritol 2-phosphate contacts are provided by residues 10-12 (DVH) and 36-37 (HS). His-44 contributes to the a divalent metal cation binding site. 4-CDP-2-C-methyl-D-erythritol 2-phosphate-binding positions include 58-60 (DIG), 63-67 (FPDTD), 102-108 (AQAPKMA), 134-137 (TTTE), Phe-141, and Arg-144.

The protein belongs to the IspF family. As to quaternary structure, homotrimer. A divalent metal cation serves as cofactor.

The enzyme catalyses 4-CDP-2-C-methyl-D-erythritol 2-phosphate = 2-C-methyl-D-erythritol 2,4-cyclic diphosphate + CMP. It participates in isoprenoid biosynthesis; isopentenyl diphosphate biosynthesis via DXP pathway; isopentenyl diphosphate from 1-deoxy-D-xylulose 5-phosphate: step 4/6. Its function is as follows. Involved in the biosynthesis of isopentenyl diphosphate (IPP) and dimethylallyl diphosphate (DMAPP), two major building blocks of isoprenoid compounds. Catalyzes the conversion of 4-diphosphocytidyl-2-C-methyl-D-erythritol 2-phosphate (CDP-ME2P) to 2-C-methyl-D-erythritol 2,4-cyclodiphosphate (ME-CPP) with a corresponding release of cytidine 5-monophosphate (CMP). In Shewanella sp. (strain ANA-3), this protein is 2-C-methyl-D-erythritol 2,4-cyclodiphosphate synthase.